A 307-amino-acid polypeptide reads, in one-letter code: Methionyl-tRNA formyltransferase (307 aa).

110 to 113 (SLLP) contacts (6S)-5,6,7,8-tetrahydrofolate.

It belongs to the Fmt family.

The catalysed reaction is L-methionyl-tRNA(fMet) + (6R)-10-formyltetrahydrofolate = N-formyl-L-methionyl-tRNA(fMet) + (6S)-5,6,7,8-tetrahydrofolate + H(+). Attaches a formyl group to the free amino group of methionyl-tRNA(fMet). The formyl group appears to play a dual role in the initiator identity of N-formylmethionyl-tRNA by promoting its recognition by IF2 and preventing the misappropriation of this tRNA by the elongation apparatus. This chain is Methionyl-tRNA formyltransferase, found in Chromobacterium violaceum (strain ATCC 12472 / DSM 30191 / JCM 1249 / CCUG 213 / NBRC 12614 / NCIMB 9131 / NCTC 9757 / MK).